The sequence spans 305 residues: MAKKLCFFLGCIMPNRYPGIEKATRLVFEELGYELVDMDGASCCPAPGVFGSFDLKTWVTIAARNLSIAEEKGYDILTVCNGCFGSLNEANHLLQENPELREFVNEKLAEIDREYKGKVKVYHVNTFLYEEVGVKKIKEKVERPLEKTDGEPLKVAVHYGCHLLKPSEVTGFPGSVEDPRTLDELVEALGAESVDYKDKIMCCGAGGGVRSRELKVSLHFTREKIFNMLEAGADCTTNVCPFCHLQFDRGQIEMKEHFEKLPPKKLPVFHYCQLAGLAFGMDPEELALETHEIDCTPVLEKLGLA.

Belongs to the HdrB family. As to quaternary structure, the heterodisulfide reductase is composed of three subunits; HdrA, HdrB and HdrC.

Its pathway is cofactor metabolism; coenzyme M-coenzyme B heterodisulfide reduction; coenzyme B and coenzyme M from coenzyme M-coenzyme B heterodisulfide: step 1/1. Functionally, part of a complex that catalyzes the reversible reduction of CoM-S-S-CoB to the thiol-coenzymes H-S-CoM (coenzyme M) and H-S-CoB (coenzyme B). This is CoB--CoM heterodisulfide reductase subunit B (hdrB) from Methanopyrus kandleri (strain AV19 / DSM 6324 / JCM 9639 / NBRC 100938).